Reading from the N-terminus, the 706-residue chain is Elongation factor G 1 (706 aa).

A tr-type G domain is found at 8 to 290; that stretch reads NRYRNIGICA…AVIDYLPAPT (283 aa). GTP is bound by residues 17–24, 88–92, and 142–145; these read AHVDAGKT, DTPGH, and NKMD.

This sequence belongs to the TRAFAC class translation factor GTPase superfamily. Classic translation factor GTPase family. EF-G/EF-2 subfamily.

It is found in the cytoplasm. Catalyzes the GTP-dependent ribosomal translocation step during translation elongation. During this step, the ribosome changes from the pre-translocational (PRE) to the post-translocational (POST) state as the newly formed A-site-bound peptidyl-tRNA and P-site-bound deacylated tRNA move to the P and E sites, respectively. Catalyzes the coordinated movement of the two tRNA molecules, the mRNA and conformational changes in the ribosome. The polypeptide is Elongation factor G 1 (Pseudomonas aeruginosa (strain ATCC 15692 / DSM 22644 / CIP 104116 / JCM 14847 / LMG 12228 / 1C / PRS 101 / PAO1)).